The sequence spans 142 residues: 3-hydroxyacyl-[acyl-carrier-protein] dehydratase FabZ (142 aa).

His48 is an active-site residue.

It belongs to the thioester dehydratase family. FabZ subfamily.

Its subcellular location is the cytoplasm. The catalysed reaction is a (3R)-hydroxyacyl-[ACP] = a (2E)-enoyl-[ACP] + H2O. Involved in unsaturated fatty acids biosynthesis. Catalyzes the dehydration of short chain beta-hydroxyacyl-ACPs and long chain saturated and unsaturated beta-hydroxyacyl-ACPs. In Clostridioides difficile (strain 630) (Peptoclostridium difficile), this protein is 3-hydroxyacyl-[acyl-carrier-protein] dehydratase FabZ.